A 259-amino-acid chain; its full sequence is Phosphatidylserine decarboxylase proenzyme (259 aa).

Residue Ser183 is the Schiff-base intermediate with substrate; via pyruvic acid of the active site. The residue at position 183 (Ser183) is a Pyruvic acid (Ser); by autocatalysis.

The protein belongs to the phosphatidylserine decarboxylase family. PSD-A subfamily. Heterodimer of a large membrane-associated beta subunit and a small pyruvoyl-containing alpha subunit. The cofactor is pyruvate. Post-translationally, is synthesized initially as an inactive proenzyme. Formation of the active enzyme involves a self-maturation process in which the active site pyruvoyl group is generated from an internal serine residue via an autocatalytic post-translational modification. Two non-identical subunits are generated from the proenzyme in this reaction, and the pyruvate is formed at the N-terminus of the alpha chain, which is derived from the carboxyl end of the proenzyme. The post-translation cleavage follows an unusual pathway, termed non-hydrolytic serinolysis, in which the side chain hydroxyl group of the serine supplies its oxygen atom to form the C-terminus of the beta chain, while the remainder of the serine residue undergoes an oxidative deamination to produce ammonia and the pyruvoyl prosthetic group on the alpha chain.

It is found in the cell membrane. The catalysed reaction is a 1,2-diacyl-sn-glycero-3-phospho-L-serine + H(+) = a 1,2-diacyl-sn-glycero-3-phosphoethanolamine + CO2. It functions in the pathway phospholipid metabolism; phosphatidylethanolamine biosynthesis; phosphatidylethanolamine from CDP-diacylglycerol: step 2/2. Its function is as follows. Catalyzes the formation of phosphatidylethanolamine (PtdEtn) from phosphatidylserine (PtdSer). The sequence is that of Phosphatidylserine decarboxylase proenzyme from Neisseria gonorrhoeae (strain ATCC 700825 / FA 1090).